Here is a 247-residue protein sequence, read N- to C-terminus: MARLEVDILTLFPRMCAGYLGESILGKAQEAGLLAATITDIRDHATGKHRVCDDAPYGGGAGMVMKPEPLVEAIEAARARLPGAWVVLTSPRGARLDQALARRFAEHGRLILVCGRYEGVDERVMTAVDMQVSIGDFVLTGGELAALCVVDAAARLVPGVLGNAASADAESFAGVEGLLEHPQYTRPPEFRGMKVPEVLLSGDHRRIERWRRREALRATRERRPDLFARLSLPESDLRLIEAGDDEL.

S-adenosyl-L-methionine-binding positions include Gly115 and 134 to 139 (IGDFVL).

The protein belongs to the RNA methyltransferase TrmD family. As to quaternary structure, homodimer.

The protein resides in the cytoplasm. The enzyme catalyses guanosine(37) in tRNA + S-adenosyl-L-methionine = N(1)-methylguanosine(37) in tRNA + S-adenosyl-L-homocysteine + H(+). Specifically methylates guanosine-37 in various tRNAs. The sequence is that of tRNA (guanine-N(1)-)-methyltransferase from Anaeromyxobacter sp. (strain K).